The primary structure comprises 740 residues: Ion-translocating oxidoreductase complex subunit C (740 aa).

4Fe-4S ferredoxin-type domains lie at 369–397 and 407–436; these read GEPQ…QQLY and KATT…VQYF. Positions 377, 380, 383, 387, 416, 419, 422, and 426 each coordinate [4Fe-4S] cluster. A disordered region spans residues 602 to 714; it reads KLEQQQANAE…NAEPEEQIDP (113 aa). Positions 605 to 615 are enriched in low complexity; sequence QQQANAEPEQQ.

It belongs to the 4Fe4S bacterial-type ferredoxin family. RnfC subfamily. As to quaternary structure, the complex is composed of six subunits: RsxA, RsxB, RsxC, RsxD, RsxE and RsxG. The cofactor is [4Fe-4S] cluster.

Its subcellular location is the cell inner membrane. Its function is as follows. Part of a membrane-bound complex that couples electron transfer with translocation of ions across the membrane. Required to maintain the reduced state of SoxR. This chain is Ion-translocating oxidoreductase complex subunit C, found in Escherichia coli O17:K52:H18 (strain UMN026 / ExPEC).